The sequence spans 351 residues: Ribosomal RNA large subunit methyltransferase M (351 aa).

S-adenosyl-L-methionine contacts are provided by residues serine 186, 219-222 (APGG), aspartate 238, aspartate 258, and aspartate 274. Lysine 303 functions as the Proton acceptor in the catalytic mechanism.

It belongs to the class I-like SAM-binding methyltransferase superfamily. RNA methyltransferase RlmE family. RlmM subfamily. Monomer.

The protein localises to the cytoplasm. The catalysed reaction is cytidine(2498) in 23S rRNA + S-adenosyl-L-methionine = 2'-O-methylcytidine(2498) in 23S rRNA + S-adenosyl-L-homocysteine + H(+). Catalyzes the 2'-O-methylation at nucleotide C2498 in 23S rRNA. In Xylella fastidiosa (strain M12), this protein is Ribosomal RNA large subunit methyltransferase M.